Here is a 328-residue protein sequence, read N- to C-terminus: 4-hydroxy-3-methylbut-2-enyl diphosphate reductase (328 aa).

Position 24 (Cys24) interacts with [4Fe-4S] cluster. (2E)-4-hydroxy-3-methylbut-2-enyl diphosphate contacts are provided by His55 and His88. Dimethylallyl diphosphate is bound by residues His55 and His88. Isopentenyl diphosphate is bound by residues His55 and His88. [4Fe-4S] cluster is bound at residue Cys110. His138 provides a ligand contact to (2E)-4-hydroxy-3-methylbut-2-enyl diphosphate. His138 provides a ligand contact to dimethylallyl diphosphate. His138 lines the isopentenyl diphosphate pocket. Glu140 acts as the Proton donor in catalysis. Thr178 serves as a coordination point for (2E)-4-hydroxy-3-methylbut-2-enyl diphosphate. Residue Cys208 participates in [4Fe-4S] cluster binding. (2E)-4-hydroxy-3-methylbut-2-enyl diphosphate is bound by residues Ser236, Ser237, Asn238, and Ser279. 4 residues coordinate dimethylallyl diphosphate: Ser236, Ser237, Asn238, and Ser279. Ser236, Ser237, Asn238, and Ser279 together coordinate isopentenyl diphosphate.

The protein belongs to the IspH family. [4Fe-4S] cluster is required as a cofactor.

The catalysed reaction is isopentenyl diphosphate + 2 oxidized [2Fe-2S]-[ferredoxin] + H2O = (2E)-4-hydroxy-3-methylbut-2-enyl diphosphate + 2 reduced [2Fe-2S]-[ferredoxin] + 2 H(+). It carries out the reaction dimethylallyl diphosphate + 2 oxidized [2Fe-2S]-[ferredoxin] + H2O = (2E)-4-hydroxy-3-methylbut-2-enyl diphosphate + 2 reduced [2Fe-2S]-[ferredoxin] + 2 H(+). Its pathway is isoprenoid biosynthesis; dimethylallyl diphosphate biosynthesis; dimethylallyl diphosphate from (2E)-4-hydroxy-3-methylbutenyl diphosphate: step 1/1. It functions in the pathway isoprenoid biosynthesis; isopentenyl diphosphate biosynthesis via DXP pathway; isopentenyl diphosphate from 1-deoxy-D-xylulose 5-phosphate: step 6/6. In terms of biological role, catalyzes the conversion of 1-hydroxy-2-methyl-2-(E)-butenyl 4-diphosphate (HMBPP) into a mixture of isopentenyl diphosphate (IPP) and dimethylallyl diphosphate (DMAPP). Acts in the terminal step of the DOXP/MEP pathway for isoprenoid precursor biosynthesis. This is 4-hydroxy-3-methylbut-2-enyl diphosphate reductase from Ehrlichia ruminantium (strain Gardel).